Here is a 98-residue protein sequence, read N- to C-terminus: Co-chaperonin GroES (98 aa).

It belongs to the GroES chaperonin family. As to quaternary structure, heptamer of 7 subunits arranged in a ring. Interacts with the chaperonin GroEL.

It is found in the cytoplasm. Its function is as follows. Together with the chaperonin GroEL, plays an essential role in assisting protein folding. The GroEL-GroES system forms a nano-cage that allows encapsulation of the non-native substrate proteins and provides a physical environment optimized to promote and accelerate protein folding. GroES binds to the apical surface of the GroEL ring, thereby capping the opening of the GroEL channel. In Brucella abortus (strain S19), this protein is Co-chaperonin GroES.